A 386-amino-acid chain; its full sequence is S-adenosylmethionine synthase (386 aa).

Histidine 14 lines the ATP pocket. Aspartate 16 contributes to the Mg(2+) binding site. Glutamate 42 is a binding site for K(+). Glutamate 55 and glutamine 98 together coordinate L-methionine. Residues 98-108 form a flexible loop region; it reads QSGDISQGVDG. Residues 162–164, 230–231, aspartate 239, 245–246, alanine 262, and lysine 266 each bind ATP; these read DSK, RF, and RK. An L-methionine-binding site is contributed by aspartate 239. Position 270 (lysine 270) interacts with L-methionine.

Belongs to the AdoMet synthase family. Homotetramer; dimer of dimers. It depends on Mg(2+) as a cofactor. The cofactor is K(+).

It localises to the cytoplasm. It catalyses the reaction L-methionine + ATP + H2O = S-adenosyl-L-methionine + phosphate + diphosphate. It functions in the pathway amino-acid biosynthesis; S-adenosyl-L-methionine biosynthesis; S-adenosyl-L-methionine from L-methionine: step 1/1. Catalyzes the formation of S-adenosylmethionine (AdoMet) from methionine and ATP. The overall synthetic reaction is composed of two sequential steps, AdoMet formation and the subsequent tripolyphosphate hydrolysis which occurs prior to release of AdoMet from the enzyme. The sequence is that of S-adenosylmethionine synthase from Salinibacter ruber (strain DSM 13855 / M31).